The following is a 338-amino-acid chain: Large ribosomal subunit protein uL3 (338 aa).

A disordered region spans residues 230–253; that stretch reads HRKGHRRTGTIGPQAPALMFTQPR.

It belongs to the universal ribosomal protein uL3 family. As to quaternary structure, part of the 50S ribosomal subunit. Forms a cluster with proteins L14 and L24e.

One of the primary rRNA binding proteins, it binds directly near the 3'-end of the 23S rRNA, where it nucleates assembly of the 50S subunit. The polypeptide is Large ribosomal subunit protein uL3 (Pyrobaculum neutrophilum (strain DSM 2338 / JCM 9278 / NBRC 100436 / V24Sta) (Thermoproteus neutrophilus)).